The chain runs to 85 residues: Cell division topological specificity factor (85 aa).

It belongs to the MinE family.

Functionally, prevents the cell division inhibition by proteins MinC and MinD at internal division sites while permitting inhibition at polar sites. This ensures cell division at the proper site by restricting the formation of a division septum at the midpoint of the long axis of the cell. The protein is Cell division topological specificity factor of Shewanella sp. (strain ANA-3).